The chain runs to 345 residues: Dihydroorotase (345 aa).

Zn(2+) is bound by residues H13 and H15. Substrate contacts are provided by residues 15 to 17 and N41; that span reads HLR. Residues K99, H136, and H174 each contribute to the Zn(2+) site. At K99 the chain carries N6-carboxylysine. Residue H136 participates in substrate binding. Residue L219 participates in substrate binding. D247 is a binding site for Zn(2+). Residue D247 is part of the active site. Residues H251 and A263 each contribute to the substrate site.

This sequence belongs to the metallo-dependent hydrolases superfamily. DHOase family. Class II DHOase subfamily. Homodimer. Zn(2+) is required as a cofactor.

It catalyses the reaction (S)-dihydroorotate + H2O = N-carbamoyl-L-aspartate + H(+). The protein operates within pyrimidine metabolism; UMP biosynthesis via de novo pathway; (S)-dihydroorotate from bicarbonate: step 3/3. Functionally, catalyzes the reversible cyclization of carbamoyl aspartate to dihydroorotate. In Acaryochloris marina (strain MBIC 11017), this protein is Dihydroorotase.